The chain runs to 308 residues: Beta-carotene hydroxylase 2, chloroplastic (308 aa).

The N-terminal 59 residues, 1 to 59 (MAAARISFSSTSRTSYYRHSPFLGPKPTPTTPSVYPITPFSPNLGSILRCRRRPSFTVC), are a transit peptide targeting the chloroplast. 2 consecutive transmembrane segments (helical) span residues 105–125 (YLVAAVMSSFGITSMAVMAVY) and 139–159 (FSEMFGTFALSVGAAVGMEFW). Positions 152-279 (AAVGMEFWAR…KFNGVPYGLF (128 aa)) constitute a Fatty acid hydroxylase domain. Residues 164 to 169 (HKALWH) carry the Histidine box-1 motif. A Histidine box-2 motif is present at residues 176–180 (HESHH). A run of 2 helical transmembrane segments spans residues 191–211 (DVFAIINAVPAIALLDYGFFH) and 215–235 (IPGLCFGAGLGITVFGMAYMF). The short motif at 237-242 (HDGLVH) is the Histidine box-3 element. A Histidine box-4 motif is present at residues 263-267 (HSLHH).

It belongs to the sterol desaturase family.

It is found in the plastid. It localises to the chloroplast membrane. The catalysed reaction is all-trans-beta-carotene + 4 reduced [2Fe-2S]-[ferredoxin] + 2 O2 + 4 H(+) = all-trans-zeaxanthin + 4 oxidized [2Fe-2S]-[ferredoxin] + 2 H2O. It catalyses the reaction all-trans-beta-carotene + 2 reduced [2Fe-2S]-[ferredoxin] + O2 + 2 H(+) = beta-cryptoxanthin + 2 oxidized [2Fe-2S]-[ferredoxin] + H2O. It carries out the reaction beta-cryptoxanthin + 2 reduced [2Fe-2S]-[ferredoxin] + O2 + 2 H(+) = all-trans-zeaxanthin + 2 oxidized [2Fe-2S]-[ferredoxin] + H2O. With respect to regulation, inhibited by o-phenanthroline and 8-hydroxyquinoline. Nonheme diiron monooxygenase involved in the biosynthesis of xanthophylls. Specific for beta-ring hydroxylations of beta-carotene. Produces beta-cryptoxanthin and zeaxanthin. Uses ferredoxin as an electron donor. The sequence is that of Beta-carotene hydroxylase 2, chloroplastic from Capsicum annuum (Capsicum pepper).